The sequence spans 449 residues: Putative cytochrome P450 135A1 (449 aa).

Residue cysteine 383 coordinates heme.

The protein belongs to the cytochrome P450 family. It depends on heme as a cofactor.

In Mycobacterium tuberculosis (strain CDC 1551 / Oshkosh), this protein is Putative cytochrome P450 135A1 (cyp135A1).